We begin with the raw amino-acid sequence, 41 residues long: Photosystem I reaction center subunit IX (41 aa).

Residues 7 to 27 (YLSTAPVVAAAWFTFTAGLLI) traverse the membrane as a helical segment.

This sequence belongs to the PsaJ family.

It localises to the plastid. The protein localises to the chloroplast thylakoid membrane. Functionally, may help in the organization of the PsaE and PsaF subunits. This Oltmannsiellopsis viridis (Marine flagellate) protein is Photosystem I reaction center subunit IX.